The following is a 92-amino-acid chain: UPF0250 protein Pmen_3793 (92 aa).

This sequence belongs to the UPF0250 family.

The chain is UPF0250 protein Pmen_3793 from Ectopseudomonas mendocina (strain ymp) (Pseudomonas mendocina).